A 430-amino-acid polypeptide reads, in one-letter code: Adenylosuccinate synthetase (430 aa).

Residues Gly12–Lys18 and Gly40–Thr42 each bind GTP. The Proton acceptor role is filled by Asp13. Mg(2+) contacts are provided by Asp13 and Gly40. IMP contacts are provided by residues Asp13–Lys16, Asn38–His41, Thr130, Arg144, Gln224, Thr239, and Arg303. The Proton donor role is filled by His41. Substrate is bound at residue Val299–Arg305. Residues Arg305, Lys331 to Asp333, and Ser413 to Ser415 each bind GTP.

It belongs to the adenylosuccinate synthetase family. As to quaternary structure, homodimer. Requires Mg(2+) as cofactor.

The protein localises to the cytoplasm. It catalyses the reaction IMP + L-aspartate + GTP = N(6)-(1,2-dicarboxyethyl)-AMP + GDP + phosphate + 2 H(+). It functions in the pathway purine metabolism; AMP biosynthesis via de novo pathway; AMP from IMP: step 1/2. In terms of biological role, plays an important role in the de novo pathway of purine nucleotide biosynthesis. Catalyzes the first committed step in the biosynthesis of AMP from IMP. This is Adenylosuccinate synthetase from Rhodopseudomonas palustris (strain TIE-1).